Consider the following 220-residue polypeptide: MSNQETQVSSLPMPPERYIANYTDENIRRNRAPRPPPPPAQHEVYSMFGIQYNNDEMIRSLESQNIKRLIPIHFDRRKELKKLNHSLLVNFLDLIDFLILNPDSPRRTEKIDDISLLFVNMHHLLNEFRPHQARETLRVMMEMQKRQRVETAARFQKHLERVREIVNTAFSALPVLDDDDDSGGAKIKTEVDPLEANAAAKNDPSYQHDRMLCKLVDAIE.

It belongs to the Mediator complex subunit 7 family. Component of the Mediator complex. Interacts with MED21.

It is found in the nucleus. In terms of biological role, component of the Mediator complex, a coactivator involved in the regulated transcription of nearly all RNA polymerase II-dependent genes. Mediator functions as a bridge to convey information from gene-specific regulatory proteins to the basal RNA polymerase II transcription machinery. Mediator is recruited to promoters by direct interactions with regulatory proteins and serves as a scaffold for the assembly of a functional preinitiation complex with RNA polymerase II and the general transcription factors. Required for activated transcription of the MtnA, MtnB and MtnD genes. The sequence is that of Mediator of RNA polymerase II transcription subunit 7 (MED7) from Drosophila melanogaster (Fruit fly).